A 347-amino-acid chain; its full sequence is UDP-N-acetylenolpyruvoylglucosamine reductase (347 aa).

Positions 27 to 197 (LPARAQRLAR…TGIELRLNKM (171 aa)) constitute an FAD-binding PCMH-type domain. The active site involves Arg173. The Proton donor role is filled by Ser247. Residue Glu342 is part of the active site.

Belongs to the MurB family. FAD serves as cofactor.

It localises to the cytoplasm. It catalyses the reaction UDP-N-acetyl-alpha-D-muramate + NADP(+) = UDP-N-acetyl-3-O-(1-carboxyvinyl)-alpha-D-glucosamine + NADPH + H(+). Its pathway is cell wall biogenesis; peptidoglycan biosynthesis. Its function is as follows. Cell wall formation. The chain is UDP-N-acetylenolpyruvoylglucosamine reductase from Alcanivorax borkumensis (strain ATCC 700651 / DSM 11573 / NCIMB 13689 / SK2).